The primary structure comprises 236 residues: UPF0257 lipoprotein YnfC (236 aa).

A signal peptide spans 1 to 16 (MKYKLLPCLLAILLTG). A lipid anchor (N-palmitoyl cysteine) is attached at cysteine 17. Residue cysteine 17 is the site of S-diacylglycerol cysteine attachment.

This sequence belongs to the UPF0257 family.

The protein localises to the cell membrane. This Escherichia coli O81 (strain ED1a) protein is UPF0257 lipoprotein YnfC.